Reading from the N-terminus, the 258-residue chain is Trans-aconitate 2-methyltransferase (258 aa).

The protein belongs to the methyltransferase superfamily. Tam family.

The protein localises to the cytoplasm. It carries out the reaction trans-aconitate + S-adenosyl-L-methionine = (E)-3-(methoxycarbonyl)pent-2-enedioate + S-adenosyl-L-homocysteine. In terms of biological role, catalyzes the S-adenosylmethionine monomethyl esterification of trans-aconitate. This is Trans-aconitate 2-methyltransferase from Acidovorax ebreus (strain TPSY) (Diaphorobacter sp. (strain TPSY)).